A 495-amino-acid chain; its full sequence is UDP-glycosyltransferase 73C9 (495 aa).

23-26 (GHMI) lines the UDP-alpha-D-glucose pocket. Catalysis depends on His-24, which acts as the Proton acceptor. The Charge relay role is filled by Asp-129. UDP-alpha-D-glucose contacts are provided by residues 355–358 (WSPQ), 373–381 (HCGWNSTLE), and 397–398 (DQ).

The protein belongs to the UDP-glycosyltransferase family.

Functionally, possesses very weak glucosyltransferase activity toward 2,4,5-trichlorophenol (TCP), when assayed with high concentrations of TCP. The polypeptide is UDP-glycosyltransferase 73C9 (Barbarea vulgaris (Yellow rocket)).